Consider the following 359-residue polypeptide: Membrane-bound lytic murein transglycosylase C (359 aa).

Positions 1–16 are cleaved as a signal peptide; it reads MKKYLALALIAPLLIS. The N-palmitoyl cysteine moiety is linked to residue C17. The S-diacylglycerol cysteine moiety is linked to residue C17.

It belongs to the transglycosylase Slt family.

It is found in the cell outer membrane. It carries out the reaction Exolytic cleavage of the (1-&gt;4)-beta-glycosidic linkage between N-acetylmuramic acid (MurNAc) and N-acetylglucosamine (GlcNAc) residues in peptidoglycan, from either the reducing or the non-reducing ends of the peptidoglycan chains, with concomitant formation of a 1,6-anhydrobond in the MurNAc residue.. Its function is as follows. Murein-degrading enzyme. May play a role in recycling of muropeptides during cell elongation and/or cell division. This is Membrane-bound lytic murein transglycosylase C from Escherichia coli O157:H7.